A 580-amino-acid chain; its full sequence is Thymidine kinase (580 aa).

2 disordered regions span residues 1–60 and 133–157; these read MAEG…KSVK and VCGR…ASMG. Residues 137 to 149 show a composition bias toward pro residues; it reads PPLPPPNHPPPAT. 260-267 is an ATP binding site; the sequence is GVMGVGKS. Glu-287 (proton acceptor) is an active-site residue. A substrate-binding site is contributed by Gln-325. Arg-415 serves as a coordination point for ATP. Arg-421 lines the substrate pocket.

It belongs to the herpesviridae thymidine kinase family. As to quaternary structure, homodimer.

It catalyses the reaction thymidine + ATP = dTMP + ADP + H(+). Functionally, catalyzes the transfer of the gamma-phospho group of ATP to thymidine to generate dTMP in the salvage pathway of pyrimidine synthesis. The dTMP serves as a substrate for DNA polymerase during viral DNA replication. Allows the virus to be reactivated and to grow in non-proliferative cells lacking a high concentration of phosphorylated nucleic acid precursors. The polypeptide is Thymidine kinase (Human herpesvirus 8 type P (isolate GK18) (HHV-8)).